The primary structure comprises 212 residues: Proteasome subunit beta 2 (212 aa).

The propeptide at 1 to 15 (MLHHPGTGQLRALKG) is removed in mature form; by autocatalysis. Thr-16 serves as the catalytic Nucleophile.

This sequence belongs to the peptidase T1B family. The 20S proteasome core is composed of 14 alpha and 14 beta subunits that assemble into four stacked heptameric rings, resulting in a barrel-shaped structure. The two inner rings, each composed of seven catalytic beta subunits, are sandwiched by two outer rings, each composed of seven alpha subunits. The catalytic chamber with the active sites is on the inside of the barrel. Has a gated structure, the ends of the cylinder being occluded by the N-termini of the alpha-subunits. Is capped at one or both ends by the proteasome regulatory ATPase, PAN.

The protein resides in the cytoplasm. The catalysed reaction is Cleavage of peptide bonds with very broad specificity.. Its activity is regulated as follows. The formation of the proteasomal ATPase PAN-20S proteasome complex, via the docking of the C-termini of PAN into the intersubunit pockets in the alpha-rings, triggers opening of the gate for substrate entry. Interconversion between the open-gate and close-gate conformations leads to a dynamic regulation of the 20S proteasome proteolysis activity. Component of the proteasome core, a large protease complex with broad specificity involved in protein degradation. This is Proteasome subunit beta 2 from Hyperthermus butylicus (strain DSM 5456 / JCM 9403 / PLM1-5).